The primary structure comprises 527 residues: Bifunctional purine biosynthesis protein PurH (527 aa).

One can recognise an MGS-like domain in the interval 1-149 (MASDFLPVHR…KNFARVAVAT (149 aa)).

Belongs to the PurH family.

The catalysed reaction is (6R)-10-formyltetrahydrofolate + 5-amino-1-(5-phospho-beta-D-ribosyl)imidazole-4-carboxamide = 5-formamido-1-(5-phospho-D-ribosyl)imidazole-4-carboxamide + (6S)-5,6,7,8-tetrahydrofolate. The enzyme catalyses IMP + H2O = 5-formamido-1-(5-phospho-D-ribosyl)imidazole-4-carboxamide. The protein operates within purine metabolism; IMP biosynthesis via de novo pathway; 5-formamido-1-(5-phospho-D-ribosyl)imidazole-4-carboxamide from 5-amino-1-(5-phospho-D-ribosyl)imidazole-4-carboxamide (10-formyl THF route): step 1/1. Its pathway is purine metabolism; IMP biosynthesis via de novo pathway; IMP from 5-formamido-1-(5-phospho-D-ribosyl)imidazole-4-carboxamide: step 1/1. The protein is Bifunctional purine biosynthesis protein PurH of Xylella fastidiosa (strain 9a5c).